The chain runs to 873 residues: Protein translocase subunit SecA (873 aa).

Residues Gln-85, 103–107 (GEGKT), and Asp-492 contribute to the ATP site. Residues 835–856 (RYAEEEGKQPIRKENQIGRNDD) are compositionally biased toward basic and acidic residues. The segment at 835 to 873 (RYAEEEGKQPIRKENQIGRNDDCPCGSGKKYKKCCGKNA) is disordered. The Zn(2+) site is built by Cys-857, Cys-859, Cys-868, and Cys-869. The segment covering 863-873 (KKYKKCCGKNA) has biased composition (basic residues).

It belongs to the SecA family. As to quaternary structure, monomer and homodimer. Part of the essential Sec protein translocation apparatus which comprises SecA, SecYEG and auxiliary proteins SecDF. Other proteins may also be involved. The cofactor is Zn(2+).

The protein resides in the cell membrane. It is found in the cytoplasm. It carries out the reaction ATP + H2O + cellular proteinSide 1 = ADP + phosphate + cellular proteinSide 2.. Its function is as follows. Part of the Sec protein translocase complex. Interacts with the SecYEG preprotein conducting channel. Has a central role in coupling the hydrolysis of ATP to the transfer of proteins into and across the cell membrane, serving as an ATP-driven molecular motor driving the stepwise translocation of polypeptide chains across the membrane. In Desulforamulus reducens (strain ATCC BAA-1160 / DSM 100696 / MI-1) (Desulfotomaculum reducens), this protein is Protein translocase subunit SecA.